The primary structure comprises 282 residues: DegV domain-containing protein M6_Spy0690 (282 aa).

One can recognise a DegV domain in the interval L3–P280. Positions 61 and 94 each coordinate hexadecanoate.

Functionally, may bind long-chain fatty acids, such as palmitate, and may play a role in lipid transport or fatty acid metabolism. This Streptococcus pyogenes serotype M6 (strain ATCC BAA-946 / MGAS10394) protein is DegV domain-containing protein M6_Spy0690.